The following is a 41-amino-acid chain: Bacteriocin (41 aa).

An intrachain disulfide couples cysteine 9 to cysteine 14.

It localises to the secreted. Functionally, bacteriocin active against S.aureus, S.typhi, B.thuringiensis, Klebsiella sp., E.coli KL16 and E.coli Gj137. In Lactococcus sp, this protein is Bacteriocin.